The primary structure comprises 413 residues: Multifunctional CCA protein (413 aa).

The ATP site is built by Gly8 and Arg11. Positions 8 and 11 each coordinate CTP. Positions 21 and 23 each coordinate Mg(2+). ATP-binding residues include Arg91, Arg137, and Arg140. Residues Arg91, Arg137, and Arg140 each contribute to the CTP site. Residues 228-329 (TGLHTLMTVT…VKLFDSIDAW (102 aa)) enclose the HD domain.

Belongs to the tRNA nucleotidyltransferase/poly(A) polymerase family. Bacterial CCA-adding enzyme type 1 subfamily. Monomer. Can also form homodimers and oligomers. Requires Mg(2+) as cofactor. Ni(2+) serves as cofactor.

It catalyses the reaction a tRNA precursor + 2 CTP + ATP = a tRNA with a 3' CCA end + 3 diphosphate. The catalysed reaction is a tRNA with a 3' CCA end + 2 CTP + ATP = a tRNA with a 3' CCACCA end + 3 diphosphate. Functionally, catalyzes the addition and repair of the essential 3'-terminal CCA sequence in tRNAs without using a nucleic acid template. Adds these three nucleotides in the order of C, C, and A to the tRNA nucleotide-73, using CTP and ATP as substrates and producing inorganic pyrophosphate. tRNA 3'-terminal CCA addition is required both for tRNA processing and repair. Also involved in tRNA surveillance by mediating tandem CCA addition to generate a CCACCA at the 3' terminus of unstable tRNAs. While stable tRNAs receive only 3'-terminal CCA, unstable tRNAs are marked with CCACCA and rapidly degraded. In Klebsiella pneumoniae (strain 342), this protein is Multifunctional CCA protein.